An 843-amino-acid polypeptide reads, in one-letter code: Pullulanase (843 aa).

The signal sequence occupies residues 1 to 19 (MKTKLWLLLVLLLSALIFS). D535 serves as the catalytic Nucleophile. E564 acts as the Proton donor in catalysis.

It belongs to the glycosyl hydrolase 13 family.

It catalyses the reaction Hydrolysis of (1-&gt;6)-alpha-D-glucosidic linkages in pullulan, amylopectin and glycogen, and in the alpha- and beta-limit dextrins of amylopectin and glycogen.. The protein is Pullulanase (pulA) of Thermotoga maritima (strain ATCC 43589 / DSM 3109 / JCM 10099 / NBRC 100826 / MSB8).